We begin with the raw amino-acid sequence, 582 residues long: Leucine-rich repeat transmembrane neuronal protein 3 (582 aa).

Residues 1–30 (MGFNVIRLLRGSAVAVVLAPTVLLTMLSSA) form the signal peptide. The LRRNT domain maps to 31-61 (ERGCPKGCRCEGKMVYCESQKLQEIPSSISA). Topologically, residues 31–420 (ERGCPKGCRC…VDTEHISFHK (390 aa)) are extracellular. LRR repeat units lie at residues 63–83 (CLGL…QFKG), 86–107 (QLTW…AFNG), 110–131 (RLKE…TFRP), 134–155 (NLRN…QFRG), 158–179 (KLLS…IFQD), 182–203 (NLEL…VFAG), 206–226 (RLKE…ALFP), 230–251 (SLQN…MSWT), 254–275 (SLQR…SVFQ), and 279–300 (NLQR…ILDS). N-linked (GlcNAc...) asparagine glycosylation is present at Asn-126. In terms of domain architecture, LRRCT spans 312 to 363 (NIWECSRNICSLVNWLRSFKGLRENTIICASPKELQGVNVIDAVKNYSICGK). Residue Asn-357 is glycosylated (N-linked (GlcNAc...) asparagine). The segment at 378 to 410 (KPTFKPKLPRPKHESKPPLPPTVGATEPSPETD) is disordered. A helical transmembrane segment spans residues 421 to 441 (IIAGSVALFLSVLVILLVMYV). The Cytoplasmic portion of the chain corresponds to 442–582 (SWKRYPASMK…RISDHKPQLA (141 aa)).

The protein belongs to the LRRTM family. In terms of tissue distribution, expressed in neuronal tissues.

It localises to the cell membrane. Its subcellular location is the postsynaptic cell membrane. Its function is as follows. May play a role in the development and maintenance of the vertebrate nervous system. Exhibits a limited synaptogenic activity in vitro, restricted to excitatory presynaptic differentiation. In Mus musculus (Mouse), this protein is Leucine-rich repeat transmembrane neuronal protein 3 (Lrrtm3).